The chain runs to 712 residues: Patatin-like phospholipase domain-containing protein AFUA_1G04970 (712 aa).

Basic and acidic residues predominate over residues 1 to 13 (MTSDEKSATRDIY). Residues 1–20 (MTSDEKSATRDIYDPNTLPD) form a disordered region. The helical transmembrane segment at 85-105 (WPFLFTVFAWITVLGFAYTLT) threads the bilayer. In terms of domain architecture, PNPLA spans 275–466 (LCLSGGATFA…RTDIPIKALN (192 aa)). The GXSXG motif lies at 306 to 310 (GTSGG). Residue serine 308 is the Nucleophile of the active site. Aspartate 453 serves as the catalytic Proton acceptor. The interval 628-688 (RRRQDRAQEH…PDARRSSMFE (61 aa)) is disordered. Composition is skewed to basic and acidic residues over residues 632 to 646 (DRAQ…ERLD) and 652 to 664 (RQSD…HYAE). Residues 667 to 676 (DSLSATSSRP) are compositionally biased toward polar residues. The segment covering 677-688 (HTPDARRSSMFE) has biased composition (basic and acidic residues).

The protein belongs to the PLPL family.

It is found in the membrane. In terms of biological role, probable lipid hydrolase. This Aspergillus fumigatus (strain ATCC MYA-4609 / CBS 101355 / FGSC A1100 / Af293) (Neosartorya fumigata) protein is Patatin-like phospholipase domain-containing protein AFUA_1G04970.